Here is a 256-residue protein sequence, read N- to C-terminus: uncharacterized protein (256 aa).

6 helical membrane passes run 6 to 26, 29 to 49, 61 to 81, 145 to 165, 175 to 195, and 218 to 238; these read TSFI…VSFL, LALV…GTFI, ISGT…GLYF, IIGC…TGIA, YYFK…IWLI, and IGWL…AIQF.

The protein belongs to the DedA family.

It is found in the cell membrane. This is an uncharacterized protein from Buchnera aphidicola subsp. Acyrthosiphon pisum (strain APS) (Acyrthosiphon pisum symbiotic bacterium).